A 674-amino-acid polypeptide reads, in one-letter code: DNA ligase (674 aa).

NAD(+)-binding positions include 34-38 (DFEFD), 83-84 (SL), and glutamate 117. The active-site N6-AMP-lysine intermediate is lysine 119. Arginine 140, glutamate 184, lysine 297, and lysine 321 together coordinate NAD(+). Positions 415, 418, 433, and 439 each coordinate Zn(2+). The BRCT domain maps to 598-674 (LVNTNFEGQS…IDEDEFERML (77 aa)).

This sequence belongs to the NAD-dependent DNA ligase family. LigA subfamily. It depends on Mg(2+) as a cofactor. The cofactor is Mn(2+).

It catalyses the reaction NAD(+) + (deoxyribonucleotide)n-3'-hydroxyl + 5'-phospho-(deoxyribonucleotide)m = (deoxyribonucleotide)n+m + AMP + beta-nicotinamide D-nucleotide.. In terms of biological role, DNA ligase that catalyzes the formation of phosphodiester linkages between 5'-phosphoryl and 3'-hydroxyl groups in double-stranded DNA using NAD as a coenzyme and as the energy source for the reaction. It is essential for DNA replication and repair of damaged DNA. The sequence is that of DNA ligase from Chlorobaculum parvum (strain DSM 263 / NCIMB 8327) (Chlorobium vibrioforme subsp. thiosulfatophilum).